The sequence spans 574 residues: DNA mismatch repair protein MutL (574 aa).

This sequence belongs to the DNA mismatch repair MutL/HexB family.

This protein is involved in the repair of mismatches in DNA. It is required for dam-dependent methyl-directed DNA mismatch repair. May act as a 'molecular matchmaker', a protein that promotes the formation of a stable complex between two or more DNA-binding proteins in an ATP-dependent manner without itself being part of a final effector complex. In Coxiella burnetii (strain RSA 331 / Henzerling II), this protein is DNA mismatch repair protein MutL.